We begin with the raw amino-acid sequence, 1154 residues long: Diacylglycerol kinase eta (1154 aa).

The tract at residues 1 to 54 (MAGAGYQHHPPGGAAVGTSAVSPTAAGPGEDSSDSEAEQGGPQKLIRKVSTSGQ) is disordered. In terms of domain architecture, PH spans 59–152 (TSIKEGQLLK…WISSLKSVQS (94 aa)). Phorbol-ester/DAG-type zinc fingers lie at residues 169–219 (MHNW…TNNC) and 241–292 (PHQW…HPVC). The DAGKc domain maps to 322-457 (FCVSPLLVFV…LDRWSIMTYE (136 aa)). Disordered regions lie at residues 560 to 608 (QASR…AVKP), 634 to 678 (DEQT…APEA), and 1123 to 1154 (FKME…SPGN). The segment covering 573-586 (PEEDAVESSSEESL) has biased composition (acidic residues). A compositionally biased stretch (basic and acidic residues) spans 656–667 (DDSKDNDTKESP). Positions 1131–1154 (QKTSSQPGPGDTESGSYEANSPGN) are enriched in polar residues.

This sequence belongs to the eukaryotic diacylglycerol kinase family. In terms of assembly, interacts with RAF1 and BRAF. Phosphorylated. Phosphorylation does not inhibit catalytic activity. As to expression, expressed in a wide variety of tissues. Most abundant in the brain and testis; also found in lung, spleen, and prostate (at protein level).

The protein localises to the cytoplasm. The protein resides in the cell membrane. The enzyme catalyses a 1,2-diacyl-sn-glycerol + ATP = a 1,2-diacyl-sn-glycero-3-phosphate + ADP + H(+). It carries out the reaction 1,2-di-(9Z-octadecenoyl)-sn-glycerol + ATP = 1,2-di-(9Z-octadecenoyl)-sn-glycero-3-phosphate + ADP + H(+). Its pathway is lipid metabolism; glycerolipid metabolism. Functionally, diacylglycerol kinase that converts diacylglycerol/DAG into phosphatidic acid/phosphatidate/PA and regulates the respective levels of these two bioactive lipids. Thereby, acts as a central switch between the signaling pathways activated by these second messengers with different cellular targets and opposite effects in numerous biological processes. Plays a key role in promoting cell growth. Activates the Ras/B-Raf/C-Raf/MEK/ERK signaling pathway induced by EGF. Regulates the recruitment of RAF1 and BRAF from cytoplasm to membranes and their heterodimerization. This is Diacylglycerol kinase eta (DGKH) from Mesocricetus auratus (Golden hamster).